The primary structure comprises 159 residues: 18.0 kDa class I heat shock protein (159 aa).

Positions 45–159 constitute a sHSP domain; the sequence is ETAAFANTHI…PEVKSIHISG (115 aa).

It belongs to the small heat shock protein (HSP20) family. As to quaternary structure, forms oligomeric structures.

It is found in the cytoplasm. This chain is 18.0 kDa class I heat shock protein, found in Daucus carota (Wild carrot).